A 54-amino-acid polypeptide reads, in one-letter code: Chymosin (54 aa).

The propeptide at 1–27 (SEITRVPLHKGKSLRKALKEHGLLEBF) is activation peptide.

This sequence belongs to the peptidase A1 family. In terms of assembly, monomer.

The catalysed reaction is Broad specificity similar to that of pepsin A. Clots milk by cleavage of a single 104-Ser-Phe-|-Met-Ala-107 bond in kappa-chain of casein.. Its function is as follows. Chymosin is synthesized in the mucosa of the stomach. The enzyme hydrolyzes casein to paracasein. The protein is Chymosin (CYM) of Felis catus (Cat).